A 125-amino-acid polypeptide reads, in one-letter code: Small ribosomal subunit protein bS6 (125 aa).

The segment at 94-125 (KAETGASSMMKTVEREEARKASQAEFAASNER) is disordered. The span at 105–115 (TVEREEARKAS) shows a compositional bias: basic and acidic residues.

This sequence belongs to the bacterial ribosomal protein bS6 family.

Functionally, binds together with bS18 to 16S ribosomal RNA. The chain is Small ribosomal subunit protein bS6 from Acidovorax ebreus (strain TPSY) (Diaphorobacter sp. (strain TPSY)).